Consider the following 886-residue polypeptide: cytokinesis protein 3 (886 aa).

One can recognise an SH3 domain in the interval 6 to 67 (QLPCMVRALY…PSNFVHCLDI (62 aa)). Over residues 72-88 (PGSSMSRTSASSFRYSS) the composition is skewed to low complexity. Residues 72–189 (PGSSMSRTSA…DLSRSTPSPL (118 aa)) form a disordered region. Polar residues predominate over residues 89 to 104 (PQKSSIDTPITSSDQG). Over residues 135–154 (LNSLGSSLSLKKSVSRPPSS) the composition is skewed to low complexity. Residues 155 to 188 (MSRTNLDVSSRWDNTADNDSQIDAQDLSRSTPSP) show a composition bias toward polar residues. Ser-213 carries the phosphoserine modification. Disordered stretches follow at residues 219-290 (TKST…SPSD) and 358-393 (RRGS…SPHT). Residues 253–264 (DNSSKPRTSLQP) show a composition bias toward polar residues.

Belongs to the CYK3 family.

The protein resides in the cell tip. Functionally, involved in cytokinesis. The polypeptide is cytokinesis protein 3 (cyk3) (Schizosaccharomyces pombe (strain 972 / ATCC 24843) (Fission yeast)).